A 174-amino-acid chain; its full sequence is Peptide deformylase (174 aa).

Fe cation-binding residues include cysteine 94 and histidine 136. Glutamate 137 is a catalytic residue. Residue histidine 140 coordinates Fe cation.

It belongs to the polypeptide deformylase family. Requires Fe(2+) as cofactor.

It catalyses the reaction N-terminal N-formyl-L-methionyl-[peptide] + H2O = N-terminal L-methionyl-[peptide] + formate. In terms of biological role, removes the formyl group from the N-terminal Met of newly synthesized proteins. Requires at least a dipeptide for an efficient rate of reaction. N-terminal L-methionine is a prerequisite for activity but the enzyme has broad specificity at other positions. In Maricaulis maris (strain MCS10) (Caulobacter maris), this protein is Peptide deformylase.